Here is a 60-residue protein sequence, read N- to C-terminus: Movement protein TGBp3 (60 aa).

The Lumenal segment spans residues methionine 1–tryptophan 6. The helical transmembrane segment at valine 7 to lysine 23 threads the bilayer. Residues proline 24 to valine 60 are Cytoplasmic-facing.

It belongs to the Tymovirales TGBp3 protein family.

Its subcellular location is the host endoplasmic reticulum membrane. Its function is as follows. Plays a role in viral cell-to-cell propagation, by facilitating genome transport to neighboring plant cells through plasmosdesmata. May induce the formation of granular vesicles derived from the Endoplasmic reticulum, which align on actin filaments. In Citrus (ICRSV), this protein is Movement protein TGBp3.